Here is an 80-residue protein sequence, read N- to C-terminus: Bowman-Birk type proteinase inhibitor DE-4 (80 aa).

The segment covering 1-10 (DDDHSDDEPR) has biased composition (acidic residues). The disordered stretch occupies residues 1 to 29 (DDDHSDDEPRESESSKPCCSSCCTRSRPP). Low complexity predominate over residues 15-29 (SKPCCSSCCTRSRPP). 7 cysteine pairs are disulfide-bonded: Cys18–Cys71, Cys19–Cys33, Cys22–Cys67, Cys23–Cys31, Cys41–Cys48, Cys45–Cys60, and Cys50–Cys58.

The protein belongs to the Bowman-Birk serine protease inhibitor family.

This chain is Bowman-Birk type proteinase inhibitor DE-4, found in Philenoptera violacea (Apple-leaf).